A 397-amino-acid polypeptide reads, in one-letter code: 2,3-bisphosphoglycerate-independent phosphoglycerate mutase (397 aa).

The protein belongs to the BPG-independent phosphoglycerate mutase family. A-PGAM subfamily.

The enzyme catalyses (2R)-2-phosphoglycerate = (2R)-3-phosphoglycerate. It functions in the pathway carbohydrate degradation; glycolysis; pyruvate from D-glyceraldehyde 3-phosphate: step 3/5. Its function is as follows. Catalyzes the interconversion of 2-phosphoglycerate and 3-phosphoglycerate. This Methanosarcina acetivorans (strain ATCC 35395 / DSM 2834 / JCM 12185 / C2A) protein is 2,3-bisphosphoglycerate-independent phosphoglycerate mutase.